The chain runs to 340 residues: MIILAVESSCDETGVGIAELGDDGTVTLLADEVASSVDEHARFGGVVPEIASRAHLEALGPTMRRALATAGVSKPDVVAATIGPGLAGALLVGVAAAKAYSAAWQVPFYAVNHLGGHLAADVFDHGPLPESIGLLVSGGHTHLLHVRSLGEPIVELGSTVDDAAGEAYDKIARLLGLGYPGGRVLDELAREGDPAAITFPRGMTGPRDDPYAFSFSGLKTAVARYVESHPEASQADVAAGFQEAVADVLTAKAVRAAKDLGVSTLLIAGGVAANSRLRELAGQRCADAGMTLRIPRPRLCTDNGAMIASFAAHLIAAGARPSPLDAASDPGLPVVQGQVA.

Residues His113 and His117 each coordinate Fe cation. Residues 135–139 (LVSGG), Asp169, Gly182, Asp186, and Asn274 each bind substrate. A Fe cation-binding site is contributed by Asp302.

It belongs to the KAE1 / TsaD family. Fe(2+) is required as a cofactor.

It is found in the cytoplasm. It carries out the reaction L-threonylcarbamoyladenylate + adenosine(37) in tRNA = N(6)-L-threonylcarbamoyladenosine(37) in tRNA + AMP + H(+). In terms of biological role, required for the formation of a threonylcarbamoyl group on adenosine at position 37 (t(6)A37) in tRNAs that read codons beginning with adenine. Is involved in the transfer of the threonylcarbamoyl moiety of threonylcarbamoyl-AMP (TC-AMP) to the N6 group of A37, together with TsaE and TsaB. TsaD likely plays a direct catalytic role in this reaction. The protein is tRNA N6-adenosine threonylcarbamoyltransferase of Mycolicibacterium vanbaalenii (strain DSM 7251 / JCM 13017 / BCRC 16820 / KCTC 9966 / NRRL B-24157 / PYR-1) (Mycobacterium vanbaalenii).